The following is a 141-amino-acid chain: Hemoglobin subunit alpha (141 aa).

Residues 1 to 141 enclose the Globin domain; sequence VLSPADKSNV…VSTVLTSKYR (141 aa). Ser3 bears the Phosphoserine mark. N6-succinyllysine is present on residues Lys7 and Lys11. An N6-acetyllysine; alternate modification is found at Lys16. Lys16 carries the N6-succinyllysine; alternate modification. Residue Tyr24 is modified to Phosphotyrosine. At Ser35 the chain carries Phosphoserine. Lys40 carries the post-translational modification N6-succinyllysine. Ser49 bears the Phosphoserine mark. His58 provides a ligand contact to O2. His87 contributes to the heme b binding site. Phosphoserine is present on Ser102. The residue at position 108 (Thr108) is a Phosphothreonine. Phosphoserine occurs at positions 124 and 131. 2 positions are modified to phosphothreonine: Thr134 and Thr137. Residue Ser138 is modified to Phosphoserine.

The protein belongs to the globin family. In terms of assembly, heterotetramer of two alpha chains and two beta chains. In terms of tissue distribution, red blood cells.

Involved in oxygen transport from the lung to the various peripheral tissues. Functionally, hemopressin acts as an antagonist peptide of the cannabinoid receptor CNR1. Hemopressin-binding efficiently blocks cannabinoid receptor CNR1 and subsequent signaling. This Leontocebus fuscicollis (Brown-mantled tamarin) protein is Hemoglobin subunit alpha (HBA).